The following is a 172-amino-acid chain: Transmembrane protein 91 (172 aa).

2 disordered regions span residues 1 to 31 (MDSP…RHEL) and 55 to 83 (PSVS…DWDG). The Extracellular segment spans residues 1 to 97 (MDSPSLRELQ…SPFLPHDHLG (97 aa)). Residues 69 to 81 (VEDMSSSDSDSDW) show a composition bias toward acidic residues. The helical transmembrane segment at 98 to 118 (LAVFSMLCCFWPVGIAAFCLA) threads the bilayer. At 119 to 139 (QKTNKAWAKGDIQGAGAASRR) the chain is on the cytoplasmic side. The chain crosses the membrane as a helical span at residues 140-160 (AFLLGVLAVGLGVCTYAAALV). The Extracellular segment spans residues 161–172 (TLAAYLASRDPP).

This sequence belongs to the CD225/Dispanin family.

It is found in the membrane. The polypeptide is Transmembrane protein 91 (TMEM91) (Homo sapiens (Human)).